Reading from the N-terminus, the 602-residue chain is Fumarate reductase flavoprotein subunit (602 aa).

Residues Gly12–Ala16, Ile36–Lys38, Ser44–Gly52, His156–Val158, Ala192–Thr193, and Asp212 contribute to the FAD site. At His45 the chain carries Tele-8alpha-FAD histidine. Catalysis depends on residues His233 and Arg249. Residues His356–Tyr357, Glu380, and Arg391–Leu397 each bind FAD. Positions Tyr581–Gly602 are disordered. The span at Ala587–Gly602 shows a compositional bias: basic and acidic residues.

Belongs to the FAD-dependent oxidoreductase 2 family. FRD/SDH subfamily. As to quaternary structure, part of an enzyme complex containing four subunits: a flavoprotein (FrdA), an iron-sulfur protein (FrdB), and two hydrophobic anchor proteins (FrdC and FrdD). Can be cross-linked to SdhE. Purified from membrane fractions associated with protoporphyrinogen IX dehydrogenase (hemG). The cofactor is FAD.

Its subcellular location is the cell inner membrane. The catalysed reaction is a quinone + succinate = fumarate + a quinol. It catalyses the reaction a menaquinone + succinate = a menaquinol + fumarate. Its activity is regulated as follows. Inhibited by oxaloacetate, a substrate analog. Functionally, two distinct, membrane-bound, FAD-containing enzymes are responsible for the catalysis of fumarate and succinate interconversion; fumarate reductase is used during anaerobic growth, and succinate dehydrogenase is used during aerobic growth. The QFR enzyme complex binds 2 quinones in or near the membrane; 1 near the [3Fe-4S] cluster (QP is proximal to the [3Fe-4S] cluster, on the cytoplasmic side of the membrane) while QD (the distal cluster) is on the other side of the membrane. It is not clear if both of the quinol-binding sites are functionally relevant. This Escherichia coli (strain K12) protein is Fumarate reductase flavoprotein subunit (frdA).